The primary structure comprises 1247 residues: Nitric oxide synthase (1247 aa).

A disordered region spans residues 13–33; that stretch reads EVAEGRESSKANHIGEERRGY. Serine 146 contacts (6R)-L-erythro-5,6,7,8-tetrahydrobiopterin. Cysteine 224 is a heme b binding site. 5 residues coordinate L-arginine: glutamine 287, tryptophan 396, tyrosine 397, glutamate 401, and asparagine 406. 2 residues coordinate (6R)-L-erythro-5,6,7,8-tetrahydrobiopterin: tryptophan 487 and phenylalanine 500. Tyrosine 515 serves as a coordination point for heme b. Residues 537 to 557 are calmodulin-binding; the sequence is PRRKFNFKQIARAVKFTSKLF. Positions 567–766 constitute a Flavodoxin-like domain; it reads ATVLYATETG…AFRKWAPEVF (200 aa). An FMN-binding site is contributed by 712–743; sequence VFALGSSAYPNFCAFGKYIDNILGELGGERLM. Residues 795-1065 enclose the FAD-binding FR-type domain; the sequence is NTVRYAPVAE…VRSAPSFHMS (271 aa). Residues 855–866 and 998–1008 contribute to the FAD site; these read YEPGDHVGIFPA and LQPRFYSISSS. NADP(+) contacts are provided by residues 1073-1091 and 1170-1185; these read ILIGPGTGIAPFRSFWQEW and KGHIYVCGDVTMAEHV.

This sequence belongs to the NOS family. It depends on heme b as a cofactor. FAD is required as a cofactor. The cofactor is FMN.

The catalysed reaction is 2 L-arginine + 3 NADPH + 4 O2 + H(+) = 2 L-citrulline + 2 nitric oxide + 3 NADP(+) + 4 H2O. Stimulated by calcium/calmodulin. Functionally, produces nitric oxide (NO) which is a messenger molecule with diverse functions throughout the body. Nitric oxide limits plasmodium development in the midgut. This is Nitric oxide synthase from Anopheles stephensi (Indo-Pakistan malaria mosquito).